The following is a 655-amino-acid chain: Katanin p80 WD40 repeat-containing subunit B1 (655 aa).

WD repeat units follow at residues 18–58 (AHGS…CIMS), 61–100 (GHTTPVESVRFNNAEELIVAGSQSGSLRVWDLEAAKILRT), 103–142 (GHKANVCSLDFHPYGDFVASGSLDTNIKLWDVRRKGCVFR), 145–184 (GHTQAVRCLRFSPDGKWLASASDDHSVKLWDLTAGKMMAE), 187–226 (EHKGPVNIIEFHPNEYLLASGSADRTVRFWDLEKFQLIGC), and 229–269 (GETI…DTVP). The interval 316-453 (VPAEMPISQP…PVPAPQSKPP (138 aa)) is disordered. Positions 358–374 (KESRAEIQNPEDYKEIF) are enriched in basic and acidic residues. Residues 415–426 (PATSNKNNTEQL) show a composition bias toward polar residues.

Belongs to the WD repeat KATNB1 family. Interacts with katna1. This interaction enhances the microtubule binding and severing activity of katna1 and also targets this activity to the centrosome.

The protein localises to the cytoplasm. It localises to the cytoskeleton. Its subcellular location is the microtubule organizing center. The protein resides in the centrosome. It is found in the spindle pole. The protein localises to the spindle. Participates in a complex which severs microtubules in an ATP-dependent manner. May act to target the enzymatic subunit of this complex to sites of action such as the centrosome. Microtubule severing may promote rapid reorganization of cellular microtubule arrays and the release of microtubules from the centrosome following nucleation. This chain is Katanin p80 WD40 repeat-containing subunit B1 (katnb1), found in Xenopus tropicalis (Western clawed frog).